The primary structure comprises 294 residues: 4-hydroxy-tetrahydrodipicolinate synthase (294 aa).

Thr-44 serves as a coordination point for pyruvate. Residue Tyr-132 is the Proton donor/acceptor of the active site. The active-site Schiff-base intermediate with substrate is Lys-160. Val-202 lines the pyruvate pocket.

The protein belongs to the DapA family. In terms of assembly, homotetramer; dimer of dimers.

The protein localises to the cytoplasm. It carries out the reaction L-aspartate 4-semialdehyde + pyruvate = (2S,4S)-4-hydroxy-2,3,4,5-tetrahydrodipicolinate + H2O + H(+). Its pathway is amino-acid biosynthesis; L-lysine biosynthesis via DAP pathway; (S)-tetrahydrodipicolinate from L-aspartate: step 3/4. Its function is as follows. Catalyzes the condensation of (S)-aspartate-beta-semialdehyde [(S)-ASA] and pyruvate to 4-hydroxy-tetrahydrodipicolinate (HTPA). The chain is 4-hydroxy-tetrahydrodipicolinate synthase from Leptospira biflexa serovar Patoc (strain Patoc 1 / Ames).